A 162-amino-acid polypeptide reads, in one-letter code: Ciliary microtubule inner protein 5 (162 aa).

The disordered stretch occupies residues 1–44 (MGSHPTPGLQRTTSAGYRLPPTRPPASVSPAARGGPMASRGLAG).

The protein localises to the cell projection. It is found in the cilium. This Homo sapiens (Human) protein is Ciliary microtubule inner protein 5.